The sequence spans 516 residues: Maturase K (516 aa).

Belongs to the intron maturase 2 family. MatK subfamily.

The protein localises to the plastid. It is found in the chloroplast. Functionally, usually encoded in the trnK tRNA gene intron. Probably assists in splicing its own and other chloroplast group II introns. This chain is Maturase K, found in Chara connivens (Convergent stonewort).